The chain runs to 228 residues: uncharacterized protein (228 aa).

This is an uncharacterized protein from Rickettsia prowazekii (strain Madrid E).